The chain runs to 70 residues: U2-agatoxin-Ao1p (70 aa).

Residues 1–20 (MRAIISLILISAMVFSMIAA) form the signal peptide. Residues 21-34 (VPXXEGLQLSEDER) constitute a propeptide that is removed on maturation. Intrachain disulfides connect cysteine 37–cysteine 53, cysteine 44–cysteine 58, and cysteine 52–cysteine 68. Leucine 69 bears the Leucine amide mark.

It belongs to the neurotoxin 01 (U2-agtx) family. Expressed by the venom gland.

The protein resides in the secreted. Functionally, insect active toxin causing rapid but reversible paralysis in crickets. No activity shown in mammals. Does not show effect on mammalian voltage-gated calcium channels. The polypeptide is U2-agatoxin-Ao1p (Agelena orientalis (Funnel-web spider)).